The sequence spans 340 residues: Guanine nucleotide-binding protein G(I)/G(S)/G(T) subunit beta-1 (340 aa).

WD repeat units lie at residues glycine 53 to aspartate 83, leucine 95 to serine 125, glycine 141 to aspartate 170, glycine 182 to aspartate 212, glycine 224 to aspartate 254, asparagine 268 to aspartate 298, and glycine 310 to asparagine 340.

It belongs to the WD repeat G protein beta family. G proteins are composed of 3 units, alpha, beta and gamma.

In terms of biological role, guanine nucleotide-binding proteins (G proteins) are involved as a modulator or transducer in various transmembrane signaling systems. The beta and gamma chains are required for the GTPase activity, for replacement of GDP by GTP, and for G protein-effector interaction. The protein is Guanine nucleotide-binding protein G(I)/G(S)/G(T) subunit beta-1 (GBETA1) of Homarus americanus (American lobster).